The sequence spans 542 residues: Probable quinate permease (542 aa).

At Met1–Tyr22 the chain is on the cytoplasmic side. Residues Leu23 to Gly43 traverse the membrane as a helical segment. Residues Thr44–Ser74 lie on the Extracellular side of the membrane. Residues Cys75 to Gly95 traverse the membrane as a helical segment. Over Arg96–Lys97 the chain is Cytoplasmic. A helical transmembrane segment spans residues Trp98 to Asn118. Residues Gly119–Arg130 are Extracellular-facing. Residues Val131–Met151 traverse the membrane as a helical segment. The Cytoplasmic portion of the chain corresponds to Ala152 to Arg159. A helical membrane pass occupies residues Leu160 to Tyr180. At Gly181–Trp193 the chain is on the extracellular side. The chain crosses the membrane as a helical span at residues Ile194–Leu214. The Cytoplasmic portion of the chain corresponds to Lys215–Arg285. The helical transmembrane segment at Leu286–Tyr306 threads the bilayer. At Tyr307 to Phe325 the chain is on the extracellular side. The helical transmembrane segment at Ser326–Ile346 threads the bilayer. At Asp347–Arg352 the chain is on the cytoplasmic side. A helical transmembrane segment spans residues Leu353–Ile373. The Extracellular portion of the chain corresponds to Lys374 to Thr387. The chain crosses the membrane as a helical span at residues Gly388 to Trp408. Topologically, residues Asn409–Tyr456 are cytoplasmic. Residues Gly457 to Val477 form a helical membrane-spanning segment. Over Pro478 to Val542 the chain is Extracellular. Residues Gly523–Val542 form a disordered region. Positions Gln531 to Val542 are enriched in basic and acidic residues.

Belongs to the major facilitator superfamily. Sugar transporter (TC 2.A.1.1) family. As to quaternary structure, interacts with creB. Post-translationally, ubiquitinated. Deubiquitinated by creB, probably to control its activity or amount.

The protein localises to the cell membrane. Functionally, integral membrane transporter that imports quinic acid to be catabolized as a carbon source. In Aspergillus fumigatus (strain ATCC MYA-4609 / CBS 101355 / FGSC A1100 / Af293) (Neosartorya fumigata), this protein is Probable quinate permease (qutD).